Here is a 177-residue protein sequence, read N- to C-terminus: MRKKRAGRPQHCRCVQDLPKVTCFTPSGVAPEAVEQVLMTVDELEAMRLADRDGLYHADAAMQMKVSRPTFGRILESGRRKVADALVGGKQICIKGGTVLAVCDSIPTERPDICLCPTCGREFPHIKGVPCRNSICPDCNEPLQRKGGCLSDEESDEQENEQRTVGYPESEEELEIE.

Residues 147–177 form a disordered region; that stretch reads GGCLSDEESDEQENEQRTVGYPESEEELEIE.

Belongs to the UPF0251 family.

The polypeptide is UPF0251 protein Cag_0886 (Chlorobium chlorochromatii (strain CaD3)).